Consider the following 148-residue polypeptide: Probable calcium-binding protein CML14 (148 aa).

EF-hand domains follow at residues Asp9–Asn44, Pro80–Lys115, and Leu116–Lys148. Residues Asp22, Asp24, Asp26, Lys28, and Glu33 each contribute to the Ca(2+) site.

In terms of biological role, potential calcium sensor. The chain is Probable calcium-binding protein CML14 (CML14) from Arabidopsis thaliana (Mouse-ear cress).